The primary structure comprises 66 residues: Large ribosomal subunit protein bL33c (66 aa).

This sequence belongs to the bacterial ribosomal protein bL33 family.

Its subcellular location is the plastid. It localises to the chloroplast. This Drimys granadensis protein is Large ribosomal subunit protein bL33c.